Consider the following 368-residue polypeptide: 2-aminoethylphosphonate--pyruvate transaminase (368 aa).

At Lys192 the chain carries N6-(pyridoxal phosphate)lysine.

The protein belongs to the class-V pyridoxal-phosphate-dependent aminotransferase family. PhnW subfamily. In terms of assembly, homodimer. Pyridoxal 5'-phosphate is required as a cofactor.

It catalyses the reaction (2-aminoethyl)phosphonate + pyruvate = phosphonoacetaldehyde + L-alanine. Its function is as follows. Involved in phosphonate degradation. This chain is 2-aminoethylphosphonate--pyruvate transaminase, found in Pseudomonas putida (strain ATCC 47054 / DSM 6125 / CFBP 8728 / NCIMB 11950 / KT2440).